Here is a 525-residue protein sequence, read N- to C-terminus: Peptide chain release factor 3 (525 aa).

Residues 9–276 (AKRRTFAIIS…GFTRYAPAPQ (268 aa)) form the tr-type G domain. GTP-binding positions include 18–25 (SHPDAGKT), 86–90 (DTPGH), and 140–143 (NKFD).

This sequence belongs to the TRAFAC class translation factor GTPase superfamily. Classic translation factor GTPase family. PrfC subfamily.

It localises to the cytoplasm. Its function is as follows. Increases the formation of ribosomal termination complexes and stimulates activities of RF-1 and RF-2. It binds guanine nucleotides and has strong preference for UGA stop codons. It may interact directly with the ribosome. The stimulation of RF-1 and RF-2 is significantly reduced by GTP and GDP, but not by GMP. The protein is Peptide chain release factor 3 of Francisella tularensis subsp. tularensis (strain WY96-3418).